The primary structure comprises 731 residues: Catalase-peroxidase (731 aa).

Residues 1–24 form a disordered region; the sequence is MSTEPNCPFSGNARKHTAAGAPSN. A cross-link (tryptophyl-tyrosyl-methioninium (Trp-Tyr) (with M-245)) is located at residues 96 to 219; that stretch reads WHSAGTYRVS…LGAVQMGLIY (124 aa). Histidine 97 serves as the catalytic Proton acceptor. Residues 219 to 245 constitute a cross-link (tryptophyl-tyrosyl-methioninium (Tyr-Met) (with W-96)); that stretch reads YVNPEGPNGNPDPIAAARDIRETFARM. Residue histidine 260 coordinates heme b. Positions 339 to 365 are disordered; it reads GAQQWKPKGDAGAGTVPDAHDPSKRHA.

The protein belongs to the peroxidase family. Peroxidase/catalase subfamily. As to quaternary structure, homodimer or homotetramer. The cofactor is heme b. Post-translationally, formation of the three residue Trp-Tyr-Met cross-link is important for the catalase, but not the peroxidase activity of the enzyme.

The catalysed reaction is H2O2 + AH2 = A + 2 H2O. It catalyses the reaction 2 H2O2 = O2 + 2 H2O. Bifunctional enzyme with both catalase and broad-spectrum peroxidase activity. This chain is Catalase-peroxidase, found in Polaromonas sp. (strain JS666 / ATCC BAA-500).